The chain runs to 447 residues: Serine/threonine-protein phosphatase 2A 55 kDa regulatory subunit B gamma isoform (447 aa).

7 WD repeats span residues 22 to 61 (TPAD…KNAP), 87 to 128 (EIEE…KRPE), 171 to 209 (GHTY…RSFN), 220 to 260 (DLTE…LCDK), 279 to 317 (EIIS…RPIE), 334 to 375 (ENDC…DVTL), and 410 to 446 (DFTK…NSDM).

It belongs to the phosphatase 2A regulatory subunit B family. PP2A consists of a common heterodimeric core enzyme, composed of a 36 kDa catalytic subunit (subunit C) and a 65 kDa constant regulatory subunit (PR65 or subunit A), that associates with a variety of regulatory subunits. Proteins that associate with the core dimer include three families of regulatory subunits B (the R2/B/PR55/B55, R3/B''/PR72/PR130/PR59 and R5/B'/B56 families), the 48 kDa variable regulatory subunit, viral proteins, and cell signaling molecules. Interacts with IER5.

The B regulatory subunit might modulate substrate selectivity and catalytic activity, and might also direct the localization of the catalytic enzyme to a particular subcellular compartment. The protein is Serine/threonine-protein phosphatase 2A 55 kDa regulatory subunit B gamma isoform (PPP2R2C) of Macaca fascicularis (Crab-eating macaque).